A 539-amino-acid polypeptide reads, in one-letter code: Phosphoenolpyruvate carboxykinase (ATP) (539 aa).

Substrate-binding residues include arginine 61, tyrosine 195, and lysine 201. Residues lysine 201, histidine 220, and 238 to 246 (GLSGTGKTT) each bind ATP. Mn(2+)-binding residues include lysine 201 and histidine 220. Residue aspartate 259 coordinates Mn(2+). Glutamate 287, arginine 325, and threonine 450 together coordinate ATP. Arginine 325 provides a ligand contact to substrate.

Belongs to the phosphoenolpyruvate carboxykinase (ATP) family. Mn(2+) serves as cofactor.

It is found in the cytoplasm. It catalyses the reaction oxaloacetate + ATP = phosphoenolpyruvate + ADP + CO2. The protein operates within carbohydrate biosynthesis; gluconeogenesis. Functionally, involved in the gluconeogenesis. Catalyzes the conversion of oxaloacetate (OAA) to phosphoenolpyruvate (PEP) through direct phosphoryl transfer between the nucleoside triphosphate and OAA. The sequence is that of Phosphoenolpyruvate carboxykinase (ATP) from Methylobacterium radiotolerans (strain ATCC 27329 / DSM 1819 / JCM 2831 / NBRC 15690 / NCIMB 10815 / 0-1).